We begin with the raw amino-acid sequence, 262 residues long: Putative ABC transporter ATP-binding protein SAV_3608 (262 aa).

Residues 18 to 248 (LDVAGLAFAY…DTLMRAHRLE (231 aa)) form the ABC transporter domain. Residue 51–58 (GPNGAGKT) participates in ATP binding.

This sequence belongs to the ABC transporter superfamily.

It localises to the cell membrane. In terms of biological role, probably part of an ABC transporter complex. Responsible for energy coupling to the transport system. The chain is Putative ABC transporter ATP-binding protein SAV_3608 from Streptomyces avermitilis (strain ATCC 31267 / DSM 46492 / JCM 5070 / NBRC 14893 / NCIMB 12804 / NRRL 8165 / MA-4680).